Consider the following 347-residue polypeptide: Mitochondrial carrier protein rim2 (347 aa).

3 Solcar repeats span residues 32-136 (PPPL…GKRI), 146-234 (ENSQ…FKHA), and 256-345 (LDWG…IMHF). 6 helical membrane-spanning segments follow: residues 38-58 (FIAG…LDVV), 105-125 (TRAL…ARSI), 152-172 (LMAA…IWLV), 214-233 (SLLG…KFKH), 262-282 (LGGA…HEVV), and 317-338 (LYGG…LFGS).

Its subcellular location is the mitochondrion inner membrane. It carries out the reaction 5-methyl-UTP(out) + UTP(in) = 5-methyl-UTP(in) + UTP(out). In terms of biological role, mitochondrial transporter that imports/exports pyrimidine nucleotides into and from mitochondria. Selectively transports uridine, thymidine, and cytosine (deoxy)nucleoside di- and triphosphates by an antiport mechanism. Also transports, with lower efficiency, uridine, thymidine, and cytosine (deoxy)nucleoside monophosphates as well as guanosine (deoxy)nucleoside di- and triphosphate. May import (deoxy)nucleoside triphosphates in exchange for intramitochondrial (deoxy)nucleoside monophosphates, thus providing precursors necessary for de novo synthesis of mitochondrial DNA and RNA while exporting products of their catabolism. Mediates the transport of iron and other divalent metal ions like copper and zinc across the mitochondrial inner membrane in a pyrimidine nucleotide-dependent fashion. Catalyzes the co-import of pyrimidine nucleotides and divalent metal ions including ferrous iron. Participates in mitochondrial genome maintenance, regulation of mitochondrial membrane potential and mitochondrial respiration. This is Mitochondrial carrier protein rim2 (rim2) from Schizosaccharomyces pombe (strain 972 / ATCC 24843) (Fission yeast).